Reading from the N-terminus, the 144-residue chain is Large ribosomal subunit protein uL15 (144 aa).

Residues methionine 1–glutamate 10 show a composition bias toward basic and acidic residues. Residues methionine 1–glutamine 52 form a disordered region. The segment covering threonine 23–glutamine 35 has biased composition (gly residues).

This sequence belongs to the universal ribosomal protein uL15 family. Part of the 50S ribosomal subunit.

Functionally, binds to the 23S rRNA. The chain is Large ribosomal subunit protein uL15 from Ligilactobacillus salivarius (strain UCC118) (Lactobacillus salivarius).